The primary structure comprises 491 residues: Cytochrome P450 2B4 (491 aa).

Position 128 is a phosphoserine; by PKA (Ser-128). A heme-binding site is contributed by Cys-436.

It belongs to the cytochrome P450 family. Heme is required as a cofactor.

The protein resides in the endoplasmic reticulum membrane. It is found in the microsome membrane. It catalyses the reaction an organic molecule + reduced [NADPH--hemoprotein reductase] + O2 = an alcohol + oxidized [NADPH--hemoprotein reductase] + H2O + H(+). Its function is as follows. Cytochromes P450 are a group of heme-thiolate monooxygenases. In liver microsomes, this enzyme is involved in an NADPH-dependent electron transport pathway. It oxidizes a variety of structurally unrelated compounds, including steroids, fatty acids, and xenobiotics. In the epoxidation of arachidonic acid it has a unique preference for the 5,6-olefin. This Oryctolagus cuniculus (Rabbit) protein is Cytochrome P450 2B4 (CYP2B4).